Here is a 346-residue protein sequence, read N- to C-terminus: UDP-N-acetylenolpyruvoylglucosamine reductase (346 aa).

Positions Leu-18 to His-189 constitute an FAD-binding PCMH-type domain. Residue Arg-165 is part of the active site. The active-site Proton donor is Ser-240. The active site involves Glu-336.

The protein belongs to the MurB family. FAD serves as cofactor.

It is found in the cytoplasm. It carries out the reaction UDP-N-acetyl-alpha-D-muramate + NADP(+) = UDP-N-acetyl-3-O-(1-carboxyvinyl)-alpha-D-glucosamine + NADPH + H(+). The protein operates within cell wall biogenesis; peptidoglycan biosynthesis. In terms of biological role, cell wall formation. The polypeptide is UDP-N-acetylenolpyruvoylglucosamine reductase (Neisseria gonorrhoeae (strain ATCC 700825 / FA 1090)).